The primary structure comprises 702 residues: Polyribonucleotide nucleotidyltransferase 2 (702 aa).

Aspartate 483 and aspartate 489 together coordinate Mg(2+). The 60-residue stretch at 550-609 (PQVTKLKVHPDKVREVIGAGGKVINKIIDETGVKINIENDGTIYIAAPDQESARVALEMI) folds into the KH domain. The S1 motif domain maps to 619-687 (GEVYTGKVIK…PQGKIGLSRK (69 aa)).

It belongs to the polyribonucleotide nucleotidyltransferase family. Mg(2+) is required as a cofactor.

Its subcellular location is the cytoplasm. The enzyme catalyses RNA(n+1) + phosphate = RNA(n) + a ribonucleoside 5'-diphosphate. Functionally, involved in mRNA degradation. Catalyzes the phosphorolysis of single-stranded polyribonucleotides processively in the 3'- to 5'-direction. The sequence is that of Polyribonucleotide nucleotidyltransferase 2 from Alkaliphilus metalliredigens (strain QYMF).